The primary structure comprises 330 residues: T-cell leukemia homeobox protein 1 (330 aa).

A disordered region spans residues 186–207 (DRFTGHPYQNRTPPKKKKPRTS). Residues 201 to 260 (KKKPRTSFTRLQICELEKRFHRQKYLASAERAALAKALKMTDAQVKTWFQNRRTKWRRQT) constitute a DNA-binding region (homeobox). An N6-acetyllysine modification is found at Lys236.

In terms of assembly, interacts with MEIS1, MEIS2, PBX1, PBX2 and PBX3.

It is found in the nucleus. Functionally, controls the genesis of the spleen. Binds to the DNA sequence 5'-GGCGGTAAGTGG-3'. This Homo sapiens (Human) protein is T-cell leukemia homeobox protein 1 (TLX1).